The sequence spans 90 residues: Small ribosomal subunit protein uS15 (90 aa).

It belongs to the universal ribosomal protein uS15 family. Part of the 30S ribosomal subunit. Forms a bridge to the 50S subunit in the 70S ribosome, contacting the 23S rRNA.

Functionally, one of the primary rRNA binding proteins, it binds directly to 16S rRNA where it helps nucleate assembly of the platform of the 30S subunit by binding and bridging several RNA helices of the 16S rRNA. Forms an intersubunit bridge (bridge B4) with the 23S rRNA of the 50S subunit in the ribosome. In Campylobacter jejuni subsp. doylei (strain ATCC BAA-1458 / RM4099 / 269.97), this protein is Small ribosomal subunit protein uS15.